The chain runs to 460 residues: 5-hydroxytryptamine receptor 2C (460 aa).

An N-terminal signal peptide occupies residues 1–32 (MVNLGNAVRSLLMHLIGLLVWQFDISISPVAA). The Extracellular portion of the chain corresponds to 33-56 (IVTDTFNSSDGGRLFQFPDGVQNW). The helical transmembrane segment at 57–81 (PALSIVVIIIMTIGGNILVIMAVSM) threads the bilayer. Over 82 to 87 (EKKLHN) the chain is Cytoplasmic. Residues 88–112 (ATNYFLMSLAIADMLVGLLVMPLSL) form a helical membrane-spanning segment. The Extracellular segment spans residues 113–129 (LAILYDYVWPLPRYLCP). A disulfide bridge links Cys128 with Cys208. A helical membrane pass occupies residues 130-152 (VWISLDVLFSTASIMHLCAISLD). Position 140 (Thr140) interacts with ergotamine. The DRY motif; important for ligand-induced conformation changes motif lies at 152 to 154 (DRY). Topologically, residues 153–168 (RYVAIRNPIEHSRFNS) are cytoplasmic. The helical transmembrane segment at 169–190 (RTKAIMKIAIVWAISIGVSVPI) threads the bilayer. Residues 191-214 (PVIGLRDESKVFVNNTTCVLNDPN) lie on the Extracellular side of the membrane. N-linked (GlcNAc...) asparagine glycans are attached at residues Asn204 and Asn205. Leu210 is a binding site for ergotamine. A helical membrane pass occupies residues 215-237 (FVLIGSFVAFFIPLTIMVITYFL). Residues 238–313 (TIYVLRRQTL…AINNEKKASK (76 aa)) are Cytoplasmic-facing. The segment at 276–301 (EEENAPNPNPDQKPRRKKKEKRPRGT) is disordered. Basic residues predominate over residues 289-299 (PRRKKKEKRPR). The helical transmembrane segment at 314 to 338 (VLGIVFFVFLIMWCPFFITNILSVL) threads the bilayer. Cysteines 339 and 343 form a disulfide. Over 339 to 349 (CGKACNQKLME) the chain is Extracellular. Residues 350-372 (KLLNVFVWIGYVCSGINPLVYTL) form a helical membrane-spanning segment. An NPxxY motif; important for ligand-induced conformation changes and signaling motif is present at residues 366–370 (NPLVY). The Cytoplasmic portion of the chain corresponds to 373 to 460 (FNKIYRRAFS…NVVSERISSV (88 aa)). The short motif at 458-460 (SSV) is the PDZ-binding element.

Belongs to the G-protein coupled receptor 1 family. As to quaternary structure, interacts with MPDZ. Interacts with ARRB2. Interacts with MPP3; this interaction stabilizes the receptor at the plasma membrane and prevents the desensitization of the HTR2C receptor-mediated calcium response.

The protein resides in the cell membrane. In terms of biological role, G-protein coupled receptor for 5-hydroxytryptamine (serotonin). Also functions as a receptor for various drugs and psychoactive substances, including ergot alkaloid derivatives, 1-2,5,-dimethoxy-4-iodophenyl-2-aminopropane (DOI) and lysergic acid diethylamide (LSD). Ligand binding causes a conformation change that triggers signaling via guanine nucleotide-binding proteins (G proteins) and modulates the activity of downstream effectors. HTR2C is coupled to G(q)/G(11) G alpha proteins and activates phospholipase C-beta, releasing diacylglycerol (DAG) and inositol 1,4,5-trisphosphate (IP3) second messengers that modulate the activity of phosphatidylinositol 3-kinase and promote the release of Ca(2+) ions from intracellular stores, respectively. Beta-arrestin family members inhibit signaling via G proteins and mediate activation of alternative signaling pathways. Regulates neuronal activity via the activation of short transient receptor potential calcium channels in the brain, and thereby modulates the activation of pro-opiomelanocortin neurons and the release of CRH that then regulates the release of corticosterone. Plays a role in the regulation of appetite and eating behavior, responses to anxiogenic stimuli and stress. Plays a role in insulin sensitivity and glucose homeostasis. In Rattus norvegicus (Rat), this protein is 5-hydroxytryptamine receptor 2C.